Reading from the N-terminus, the 139-residue chain is Small ribosomal subunit protein uS11 (139 aa).

Positions 118–139 (EDVTPIPHDGTRPKGGRRGRRV) are disordered.

It belongs to the universal ribosomal protein uS11 family. Part of the 30S ribosomal subunit.

Functionally, located on the platform of the 30S subunit. In Thermococcus sibiricus (strain DSM 12597 / MM 739), this protein is Small ribosomal subunit protein uS11.